We begin with the raw amino-acid sequence, 196 residues long: CMRF35-like molecule 2 (196 aa).

A signal peptide spans 1-17; that stretch reads MRLCAGLLLLCFQGCLS. The 105-residue stretch at 18-122 folds into the Ig-like V-type domain; it reads LTGPGSVSGY…DSWSRDPSVS (105 aa). The Extracellular segment spans residues 18–171; it reads LTGPGSVSGY…QLWSLLSSIQ (154 aa). A disulfide bridge connects residues Cys36 and Cys104. Residue Asn84 is glycosylated (N-linked (GlcNAc...) asparagine). Residues 172–192 form a helical membrane-spanning segment; the sequence is FQVLVFLKLPLFLSMLCAIFW. The Cytoplasmic segment spans residues 193–196; sequence VNRL.

The protein belongs to the CD300 family. In terms of assembly, interacts with TYROBP.

It localises to the cell membrane. Functionally, probably acts as an activating receptor. The sequence is that of CMRF35-like molecule 2 (Cd300e) from Mus musculus (Mouse).